The primary structure comprises 130 residues: Small ribosomal subunit protein uS8 (130 aa).

Belongs to the universal ribosomal protein uS8 family. As to quaternary structure, part of the 30S ribosomal subunit. Contacts proteins S5 and S12.

Its function is as follows. One of the primary rRNA binding proteins, it binds directly to 16S rRNA central domain where it helps coordinate assembly of the platform of the 30S subunit. The polypeptide is Small ribosomal subunit protein uS8 (Actinobacillus pleuropneumoniae serotype 5b (strain L20)).